The sequence spans 90 residues: Transcriptional repressor SdpR (90 aa).

Positions 1 to 87 constitute an HTH arsR-type domain; the sequence is MNNVFKAISD…WMLNFINKGD (87 aa). A DNA-binding region (H-T-H motif) is located at residues 39–62; that stretch reads PSISHHLNILKQAEVISDHRKGQF.

The protein localises to the cytoplasm. Its function is as follows. Represses the transcription of the sdpIR operon and of several other operons that probably contribute to delaying commitment to sporulation. This Bacillus subtilis (strain 168) protein is Transcriptional repressor SdpR (sdpR).